A 96-amino-acid polypeptide reads, in one-letter code: RxLR effector protein PITG_11507 (96 aa).

The N-terminal stretch at 1 to 19 (MRLSFIIVAVSLLAGGSGA) is a signal peptide. The tract at residues 27–59 (SDVLTSRGTNEGARTGKRSLRYDSNVERTGEED) is disordered. Residues 44–59 (RSLRYDSNVERTGEED) carry the RxLR-dEER motif. A compositionally biased stretch (basic and acidic residues) spans 46–55 (LRYDSNVERT).

Belongs to the RxLR effector family.

It is found in the secreted. The protein resides in the host nucleus. It localises to the host cytoplasm. In terms of biological role, effector that enhances P.infestans colonization of Nicotiana benthamiana leaves. The polypeptide is RxLR effector protein PITG_11507 (Phytophthora infestans (strain T30-4) (Potato late blight agent)).